Reading from the N-terminus, the 502-residue chain is Calnexin homolog (502 aa).

A signal peptide spans M1–G19. Topologically, residues T20–K481 are lumenal. Residues N25 and N104 are each glycosylated (N-linked (GlcNAc...) asparagine). C125 and C161 are joined by a disulfide. Residues K131 and D159 each contribute to the an alpha-D-glucoside site. The p domain (Extended arm) stretch occupies residues I248–E381. 5 repeat units span residues D250–D261, D267–E278, H286–S297, D305–E316, and G320–P330. 4 X approximate repeats stretches follow at residues D250–E316 and G320–P377. N296 carries an N-linked (GlcNAc...) asparagine glycan. A disulfide bridge connects residues C332 and C338. Repeat copies occupy residues G339–A349, G353–P363, and G367–P377. E398 lines the an alpha-D-glucoside pocket. N416 and N425 each carry an N-linked (GlcNAc...) asparagine glycan. The helical transmembrane segment at F482–T502 threads the bilayer.

Belongs to the calreticulin family. As to quaternary structure, interacts with MPD1.

The protein resides in the endoplasmic reticulum membrane. Interacts with newly synthesized monoglucosylated glycoproteins in the endoplasmic reticulum. It may act in assisting protein assembly and/or in the retention within the ER of unassembled protein subunits. It seems to play a major role in the quality control apparatus of the ER by the retention of incorrectly folded proteins. The protein is Calnexin homolog (CNE1) of Saccharomyces cerevisiae (strain ATCC 204508 / S288c) (Baker's yeast).